The following is a 337-amino-acid chain: Inositol 2-dehydrogenase (337 aa).

The protein belongs to the Gfo/Idh/MocA family. Homotetramer.

The catalysed reaction is myo-inositol + NAD(+) = scyllo-inosose + NADH + H(+). Functionally, involved in the oxidation of myo-inositol (MI) to 2-keto-myo-inositol (2KMI or 2-inosose). The polypeptide is Inositol 2-dehydrogenase (Arthrobacter sp. (strain FB24)).